The following is a 500-amino-acid chain: NAD(P)H-quinone oxidoreductase chain 4, chloroplastic (500 aa).

Transmembrane regions (helical) follow at residues F4–L24, Y35–F55, I87–V107, L113–S130, L134–M154, F167–L187, I211–H231, H242–V262, A272–A292, I305–D325, G330–G350, L386–T406, I416–M436, and L462–V482.

The protein belongs to the complex I subunit 4 family.

The protein resides in the plastid. Its subcellular location is the chloroplast thylakoid membrane. The enzyme catalyses a plastoquinone + NADH + (n+1) H(+)(in) = a plastoquinol + NAD(+) + n H(+)(out). The catalysed reaction is a plastoquinone + NADPH + (n+1) H(+)(in) = a plastoquinol + NADP(+) + n H(+)(out). This Olimarabidopsis pumila (Dwarf rocket) protein is NAD(P)H-quinone oxidoreductase chain 4, chloroplastic.